A 96-amino-acid chain; its full sequence is Co-chaperonin GroES (96 aa).

It belongs to the GroES chaperonin family. Heptamer of 7 subunits arranged in a ring. Interacts with the chaperonin GroEL.

The protein resides in the cytoplasm. Its function is as follows. Together with the chaperonin GroEL, plays an essential role in assisting protein folding. The GroEL-GroES system forms a nano-cage that allows encapsulation of the non-native substrate proteins and provides a physical environment optimized to promote and accelerate protein folding. GroES binds to the apical surface of the GroEL ring, thereby capping the opening of the GroEL channel. The polypeptide is Co-chaperonin GroES (Citrifermentans bemidjiense (strain ATCC BAA-1014 / DSM 16622 / JCM 12645 / Bem) (Geobacter bemidjiensis)).